A 558-amino-acid chain; its full sequence is Oxygen-dependent choline dehydrogenase (558 aa).

Position 4–33 (4–33 (DYIIIGAGSAGNVLATRLTEDSDTTVLLLE)) interacts with FAD. Histidine 473 functions as the Proton acceptor in the catalytic mechanism.

This sequence belongs to the GMC oxidoreductase family. The cofactor is FAD.

The enzyme catalyses choline + A = betaine aldehyde + AH2. It catalyses the reaction betaine aldehyde + NAD(+) + H2O = glycine betaine + NADH + 2 H(+). It functions in the pathway amine and polyamine biosynthesis; betaine biosynthesis via choline pathway; betaine aldehyde from choline (cytochrome c reductase route): step 1/1. Functionally, involved in the biosynthesis of the osmoprotectant glycine betaine. Catalyzes the oxidation of choline to betaine aldehyde and betaine aldehyde to glycine betaine at the same rate. The chain is Oxygen-dependent choline dehydrogenase from Citrobacter koseri (strain ATCC BAA-895 / CDC 4225-83 / SGSC4696).